The sequence spans 173 residues: Photosystem I assembly protein Ycf3 (173 aa).

3 TPR repeats span residues 35-68, 72-105, and 120-153; these read AFSY…EEDP, SYIL…NFKL, and GVQA…APDN.

This sequence belongs to the Ycf3 family.

Its subcellular location is the plastid. The protein resides in the chloroplast thylakoid membrane. Its function is as follows. Essential for the assembly of the photosystem I (PSI) complex. May act as a chaperone-like factor to guide the assembly of the PSI subunits. In Porphyra purpurea (Red seaweed), this protein is Photosystem I assembly protein Ycf3.